Consider the following 1167-residue polypeptide: mRNA 3'-end-processing protein rna-14 (1167 aa).

Positions 1–245 (MSDDYDPTNI…DPTPVTQPAP (245 aa)) are disordered. Composition is skewed to acidic residues over residues 16 to 26 (EEQEDYGEADG) and 70 to 79 (NTDDVGDDYD). Residues 102–111 (TAPQPAAPVA) show a composition bias toward low complexity. Over residues 124 to 137 (DSDDEDEDGDDDGE) the composition is skewed to acidic residues. Composition is skewed to low complexity over residues 138-150 (PQQQQQQQQQQQP) and 159-191 (GSGASSSGGSAPAPASASATAAPQSHSPAPQTA). Residues 192–218 (TLTVQDNAGATTFNAPPVPQQVSHQSG) show a composition bias toward polar residues. Over residues 219-245 (ATTAAVPTTPSSAAPAVDPTPVTQPAP) the composition is skewed to low complexity. HAT repeat units lie at residues 277 to 309 (NDIDGARQVYERFLAIFPQAADIWVEYLDLELS), 311 to 342 (NNFPQAEGIFAKCLMTTPNVNLWTRYLDYIRR), 352 to 387 (QARQTVSQAYEFVIDNIGLDKDSGKIWAEYIQFIKF), 401 to 434 (QKMDQLRKAYQRAICVPISNVNTLWKEYDQFEMG), 471 to 504 (TNLPRLPPAPGFDGDQEFMEQVEIWKKWIAWEKS), and 518 to 550 (LYQKRILYVYNQALMALRFWPEMWVDAAQWCFD). The span at 882 to 893 (QQQPQLPMSQRD) shows a compositional bias: polar residues. Disordered stretches follow at residues 882–980 (QQQP…SGAG) and 1075–1167 (AYRE…PPPY). A compositionally biased stretch (low complexity) spans 908–922 (SPSAGPGAPFAPYAA). Positions 924–946 (RPLDDRDYDDHPRKIARSEHDPF) are enriched in basic and acidic residues. The span at 969–979 (GAAGAYSGSGA) shows a compositional bias: gly residues. Over residues 1079–1090 (SPGPLGGRPLSP) the composition is skewed to low complexity. Residues 1121 to 1134 (EPPPAAQYGVPPPA) are compositionally biased toward pro residues. Over residues 1135-1151 (QYDGGWAQQQQQQQYGQ) the composition is skewed to low complexity.

The protein localises to the nucleus. It is found in the cytoplasm. In terms of biological role, component of the cleavage factor IA (CFIA) complex, which is involved in the endonucleolytic cleavage during polyadenylation-dependent pre-mRNA 3'-end formation. This Neurospora crassa (strain ATCC 24698 / 74-OR23-1A / CBS 708.71 / DSM 1257 / FGSC 987) protein is mRNA 3'-end-processing protein rna-14 (rna-14).